A 954-amino-acid chain; its full sequence is Calsyntenin-1 (954 aa).

Residues 1-25 (MRIRGVKPFASAVGLLLGLLYAVDA) form the signal peptide. The Extracellular segment spans residues 26 to 833 (AKVNKHKPWI…THQASVVPSA (808 aa)). Cadherin domains follow at residues 35 to 151 (IETT…SPVF) and 152 to 252 (KEKS…KPSW). N-linked (GlcNAc...) asparagine glycans are attached at residues Asn333, Asn353, and Asn552. Residues 834–854 (ATIVIVVCVSFLVFMIILGVF) form a helical membrane-spanning segment. Over 855 to 954 (RIRAAHQRTM…LEWDDSTLTY (100 aa)) the chain is Cytoplasmic. The interval 891 to 954 (TYEDQHSSEE…LEWDDSTLTY (64 aa)) is disordered. A compositionally biased stretch (acidic residues) spans 900–935 (EEGDEEEEESEDGEEEDDITSAESDSSEDEAGEQED).

Belongs to the calsyntenin family. As to quaternary structure, homooligomer and heterooligomer; mediates both homophilic and heterophilc interactions with clstn2 and clstn3 paralogs via cadherin domains. By 48 hours post-fertilization (hpf), widely expressed in the brain, with strong expression in the telencephalon and the midbrain.

It is found in the postsynaptic cell membrane. It localises to the endoplasmic reticulum membrane. The protein localises to the golgi apparatus membrane. Its subcellular location is the cell projection. The protein resides in the neuron projection. Functionally, postsynaptic adhesion molecule involved in vesicle trafficking; required for branching of peripheral but not central axons of sensory neurons. Promotes synapse development by acting as a cell adhesion molecule at the postsynaptic membrane, which associates with presynaptic neurexins. The polypeptide is Calsyntenin-1 (Danio rerio (Zebrafish)).